We begin with the raw amino-acid sequence, 273 residues long: uncharacterized protein (273 aa).

An NAD(+)-binding site is contributed by 10 to 34; sequence VITGAATGIGQATAEVFANEGARVI. Serine 142 lines the substrate pocket. Tyrosine 155 (proton acceptor) is an active-site residue.

It belongs to the short-chain dehydrogenases/reductases (SDR) family.

This is an uncharacterized protein from Bacillus subtilis (strain 168).